Here is a 327-residue protein sequence, read N- to C-terminus: tRNA-dihydrouridine(20/20a) synthase (327 aa).

Residues 11–13 and Gln63 contribute to the FMN site; that span reads PML. The active-site Proton donor is the Cys93. FMN contacts are provided by residues Lys132, His165, 205–207, and 227–228; these read NGG and GR.

It belongs to the Dus family. DusA subfamily. It depends on FMN as a cofactor.

It carries out the reaction 5,6-dihydrouridine(20) in tRNA + NADP(+) = uridine(20) in tRNA + NADPH + H(+). The enzyme catalyses 5,6-dihydrouridine(20) in tRNA + NAD(+) = uridine(20) in tRNA + NADH + H(+). It catalyses the reaction 5,6-dihydrouridine(20a) in tRNA + NADP(+) = uridine(20a) in tRNA + NADPH + H(+). The catalysed reaction is 5,6-dihydrouridine(20a) in tRNA + NAD(+) = uridine(20a) in tRNA + NADH + H(+). Its function is as follows. Catalyzes the synthesis of 5,6-dihydrouridine (D), a modified base found in the D-loop of most tRNAs, via the reduction of the C5-C6 double bond in target uridines. Specifically modifies U20 and U20a in tRNAs. This Vibrio cholerae serotype O1 (strain ATCC 39315 / El Tor Inaba N16961) protein is tRNA-dihydrouridine(20/20a) synthase.